The primary structure comprises 86 residues: MKTLLLTLVVVAIVCLDLGYTLTCLICPEKDCQKVHTCRNEEKICVKRFYDKNQLGWRAQRGCAVSCPKAKPNETVQCCSTDKCNK.

Positions Met1–Thr23 are cleaved as a signal peptide. Disulfide bonds link Cys24-Cys45, Cys27-Cys32, Cys38-Cys63, Cys67-Cys78, and Cys79-Cys84.

It belongs to the three-finger toxin family. Ancestral subfamily. Orphan group II sub-subfamily. As to expression, expressed by the venom gland.

It localises to the secreted. Functionally, binds with low affinity to muscular (alpha-1-beta-1-delta-epsilon/CHRNA1-CHRNB1-CHRND-CHRNE) and very low affinity to neuronal (alpha-7/CHRNA7) nicotinic acetylcholine receptor (nAChR). The protein is Weak toxin 1 of Bungarus candidus (Malayan krait).